The following is an 802-amino-acid chain: uncharacterized protein (802 aa).

The 36-residue stretch at 6–41 (SRSEKVKRIFQQFDGNLDGGLSREEMSALVVAVNPR) folds into the EF-hand 1 domain. TPR repeat units follow at residues 229–262 (FDGH…QPTD), 264–296 (RPHF…AESG), 305–338 (PQIY…CPTH), 339–372 (YRAL…KPDY), 373–406 (ADAH…KPGH), 407–440 (VDAL…WPNH), and 442–474 (RAQL…TNRV). An EF-hand 2 domain is found at 595–630 (AIKAINEKILSVLDDSGSGRVDLGMFYAVIAPLCGG).

This is an uncharacterized protein from Arabidopsis thaliana (Mouse-ear cress).